Reading from the N-terminus, the 500-residue chain is Aspartyl/glutamyl-tRNA(Asn/Gln) amidotransferase subunit B (500 aa).

This sequence belongs to the GatB/GatE family. GatB subfamily. As to quaternary structure, heterotrimer of A, B and C subunits.

The enzyme catalyses L-glutamyl-tRNA(Gln) + L-glutamine + ATP + H2O = L-glutaminyl-tRNA(Gln) + L-glutamate + ADP + phosphate + H(+). It catalyses the reaction L-aspartyl-tRNA(Asn) + L-glutamine + ATP + H2O = L-asparaginyl-tRNA(Asn) + L-glutamate + ADP + phosphate + 2 H(+). Allows the formation of correctly charged Asn-tRNA(Asn) or Gln-tRNA(Gln) through the transamidation of misacylated Asp-tRNA(Asn) or Glu-tRNA(Gln) in organisms which lack either or both of asparaginyl-tRNA or glutaminyl-tRNA synthetases. The reaction takes place in the presence of glutamine and ATP through an activated phospho-Asp-tRNA(Asn) or phospho-Glu-tRNA(Gln). This chain is Aspartyl/glutamyl-tRNA(Asn/Gln) amidotransferase subunit B, found in Brucella ovis (strain ATCC 25840 / 63/290 / NCTC 10512).